Reading from the N-terminus, the 662-residue chain is MPAVDKLLLEEALQDSPQTRSLLSVFEEDAGTLTDYTNQLLQAMQRVYGAQNEMCLATQQLSRQLLAYEKQNFALGKGDEEVISTLHYFSKVMDELNGLHSELAKQLADTMVLPVIQFREKDLTEVSTLKDLFGLASNEHDLSMAKYSRLPKRKENERVKTDVAKEVAAARRKQHLSSLQYYCALNALQYRKRAAMMEPLIGFAHGQINFFKKGAEMFSKSMDGFLSSVTDMVQSIQVELEAEADKMRVSQQELLSVSESVYTPDIDVATPQINRNLIQKTGYLNLRNKTGLVTTTWERLYFFTQGGNLMCQPRGAVAGGLIQDLDNCSVMAVDCEDRRYCFQISTPSGKPGIILQAESRKEYEEWICAINNISRQIYLTDNPEAVAIKLNQTALQAVTPITSFGKKQESFYFSQNIKNSDTGYVKIVPKAAASIPETEELIAPGTPIQFDIVLPATEFLDQNRGSRRINPFGETEDDSFPDAEDSLLQQMFIVRFLGSMAVKTDSTTEVIYEAMRQVLAARAIHNIFRTTESHLMVTSQTLRLIDPQTQVSRACFELTSVTQFAAHQENKRLVGFVIRVPESTGEESLSTYIFESNSEGEKICYAINLGKEIIEVQKDPEALARLMLSVPLTNDGKYVLLNDQADDTGGSPSDHRGAESEA.

The BAR domain maps to 3-268; that stretch reads AVDKLLLEEA…ESVYTPDIDV (266 aa). Residues 277–375 form the PH domain; that stretch reads LIQKTGYLNL…WICAINNISR (99 aa). The 150-residue stretch at 486–635 folds into the PID domain; that stretch reads SLLQQMFIVR…LMLSVPLTND (150 aa). Positions 643–662 are disordered; it reads DQADDTGGSPSDHRGAESEA. Over residues 653–662 the composition is skewed to basic and acidic residues; sequence SDHRGAESEA.

As to quaternary structure, homodimer. Homotetramer. Binds RAB5A/Rab5 through an N-terminal domain. This interaction is essential for its recruitment to endosomal membranes as well as its role in cell proliferation. Binds subunits of the NuRD/MeCP1 complex. Interacts with FSHR; interaction is independent of follicle stimulating hormone stimulation. Interacts with APPL1; the interaction is decreased by adiponectin in a time-dependent manner. Forms a complex comprising APPL1, RUVBL2, CTNNB1, HDAC1 and HDAC2; interaction reduces interaction between CTNNB1, HDAC1, HDAC2 and RUVBL2 leading to the decrease of deacetylase activity of this complex; affects the recruitment of repressive complexes to the Wnt target genes. Interacts (via BAR domain) with TBC1D1; interaction is dependent of TBC1D1 phosphorylation at 'Ser-235'; interaction diminishes the phosphorylation of TBC1D1 at 'Thr-596', resulting in inhibition of SLC2A4 translocation and glucose uptake. Interacts with ANXA2; targets APPL2 to endosomes and acting in parallel to RAB5A. Interacts with RAB31 (in GTP-bound form); interaction contributes to or enhances recruitment of APPL2 to the phagosomes; interaction enhances Fc-gamma receptor-mediated phagocytosis through PI3K/Akt signaling in macrophages. Interacts with PIK3R1; forms a complex with PIK3R1 and APPL1. Interacts (via BAR domain) with ADIPOR1; hinders the accessibility of APPL1 to ADIPOR1; negatively regulates adiponectin signaling; ADIPOQ dissociates this interaction and facilitates the recruitment of APPL1 to ADIPOR1. Interacts (via BAR domain) with ADIPOR2; ADIPOQ dissociates this interaction.

It localises to the early endosome membrane. It is found in the nucleus. Its subcellular location is the cell membrane. The protein localises to the endosome membrane. The protein resides in the cytoplasm. It localises to the cytoplasmic vesicle. It is found in the phagosome. Its subcellular location is the cell projection. The protein localises to the ruffle. The protein resides in the ruffle membrane. It localises to the phagosome membrane. In terms of biological role, multifunctional adapter protein that binds to various membrane receptors, nuclear factors and signaling proteins to regulate many processes, such as cell proliferation, immune response, endosomal trafficking and cell metabolism. Regulates signaling pathway leading to cell proliferation through interaction with RAB5A and subunits of the NuRD/MeCP1 complex. Plays a role in immune response by modulating phagocytosis, inflammatory and innate immune responses. In macrophages, enhances Fc-gamma receptor-mediated phagocytosis through interaction with RAB31 leading to activation of PI3K/Akt signaling. In response to LPS, modulates inflammatory responses by playing a key role on the regulation of TLR4 signaling and in the nuclear translocation of RELA/NF-kappa-B p65 and the secretion of pro- and anti-inflammatory cytokines. Also functions as a negative regulator of innate immune response via inhibition of AKT1 signaling pathway by forming a complex with APPL1 and PIK3R1. Plays a role in endosomal trafficking of TGFBR1 from the endosomes to the nucleus. Plays a role in cell metabolism by regulating adiponecting ans insulin signaling pathways and adaptative thermogenesis. In muscle, negatively regulates adiponectin-simulated glucose uptake and fatty acid oyidation by inhibiting adiponectin signaling pathway through APPL1 sequestration thereby antagonizing APPL1 action. In muscles, negatively regulates insulin-induced plasma membrane recruitment of GLUT4 and glucose uptake through interaction with TBC1D1. Plays a role in cold and diet-induced adaptive thermogenesis by activating ventromedial hypothalamus (VMH) neurons throught AMPK inhibition which enhances sympathetic outflow to subcutaneous white adipose tissue (sWAT), sWAT beiging and cold tolerance. Also plays a role in other signaling pathways namely Wnt/beta-catenin, HGF and glucocorticoid receptor signaling. Positive regulator of beta-catenin/TCF-dependent transcription through direct interaction with RUVBL2/reptin resulting in the relief of RUVBL2-mediated repression of beta-catenin/TCF target genes by modulating the interactions within the beta-catenin-reptin-HDAC complex. May affect adult neurogenesis in hippocampus and olfactory system via regulating the sensitivity of glucocorticoid receptor. Required for fibroblast migration through HGF cell signaling. This Rattus norvegicus (Rat) protein is DCC-interacting protein 13-beta.